The sequence spans 907 residues: Protein translocase subunit SecA (907 aa).

ATP-binding positions include Q87, 105-109, and D506; that span reads GEGKT. The span at 834–850 shows a compositional bias: basic and acidic residues; sequence LEQQREEEAREQAEKMK. Residues 834 to 907 form a disordered region; sequence LEQQREEEAR…KYKQCHGKIE (74 aa). Residues 864 to 875 are compositionally biased toward low complexity; sequence QPQPSQQQGEQP. Residues C891, C893, C902, and H903 each contribute to the Zn(2+) site. Positions 897-907 are enriched in basic residues; the sequence is KKYKQCHGKIE.

This sequence belongs to the SecA family. In terms of assembly, monomer and homodimer. Part of the essential Sec protein translocation apparatus which comprises SecA, SecYEG and auxiliary proteins SecDF-YajC and YidC. Zn(2+) is required as a cofactor.

The protein resides in the cell inner membrane. It localises to the cytoplasm. The enzyme catalyses ATP + H2O + cellular proteinSide 1 = ADP + phosphate + cellular proteinSide 2.. Its function is as follows. Part of the Sec protein translocase complex. Interacts with the SecYEG preprotein conducting channel. Has a central role in coupling the hydrolysis of ATP to the transfer of proteins into and across the cell membrane, serving both as a receptor for the preprotein-SecB complex and as an ATP-driven molecular motor driving the stepwise translocation of polypeptide chains across the membrane. The polypeptide is Protein translocase subunit SecA (Alcanivorax borkumensis (strain ATCC 700651 / DSM 11573 / NCIMB 13689 / SK2)).